A 314-amino-acid polypeptide reads, in one-letter code: Olfactory receptor 9Q2 (314 aa).

Over 1-25 the chain is Extracellular; it reads MAERNYTVVTEFFLTAFTEHLQWRV. The N-linked (GlcNAc...) asparagine glycan is linked to Asn5. The chain crosses the membrane as a helical span at residues 26 to 46; sequence PLFLIFLSFYLATMLGNTGMI. Residues 47-54 lie on the Cytoplasmic side of the membrane; it reads LLIRGDRR. The helical transmembrane segment at 55 to 75 threads the bilayer; sequence LHTPMYFFLSHLSLVDICYSS. The Extracellular segment spans residues 76–99; the sequence is AIIPQMLAVLWEHGTTISQARCAA. Cys97 and Cys189 form a disulfide bridge. Residues 100-120 traverse the membrane as a helical segment; sequence QFFLFTFFASIDCYLLAIMAY. The Cytoplasmic portion of the chain corresponds to 121 to 139; it reads DRYTAVCQPLLYVTIITEK. The chain crosses the membrane as a helical span at residues 140 to 160; it reads ARWGLVTGAYVAGFFSAFVRT. Residues 161–197 are Extracellular-facing; it reads VTAFTLSFCGNNEINFIFCDLPPLLKLSCGDSYTQEV. Residues 198–217 form a helical membrane-spanning segment; that stretch reads VIIVFALFVMPACILVILVS. Residues 218-237 lie on the Cytoplasmic side of the membrane; sequence YLFIIVAILQIHSAGGRAKT. Residues 238–258 form a helical membrane-spanning segment; sequence FSTCASHLTAVALFFGTLIFM. Residues 259 to 271 are Extracellular-facing; that stretch reads YLRDNTGQSSEGD. The chain crosses the membrane as a helical span at residues 272–292; it reads RVVSVLYTVVTPMLNPLIYSL. The Cytoplasmic portion of the chain corresponds to 293 to 314; sequence RNKEVKEATRKALSKSKPARRP.

It belongs to the G-protein coupled receptor 1 family.

It is found in the cell membrane. In terms of biological role, odorant receptor. The protein is Olfactory receptor 9Q2 (OR9Q2) of Homo sapiens (Human).